The sequence spans 303 residues: Recombination-associated protein RdgC (303 aa).

Belongs to the RdgC family.

The protein localises to the cytoplasm. Its subcellular location is the nucleoid. Its function is as follows. May be involved in recombination. This chain is Recombination-associated protein RdgC, found in Salmonella agona (strain SL483).